Here is a 428-residue protein sequence, read N- to C-terminus: C4-dicarboxylate transport protein (428 aa).

Helical transmembrane passes span 8–28, 44–64, 76–96, 142–162, 184–204, 222–242, 289–309, 326–346, and 352–372; these read SLYV…HFYP, LIKM…IAGM, VALL…LIIV, IGAF…LFGF, VIFG…FGAM, LIIC…GSIA, VVGL…SIYL, IFHQ…AAGV, and IVLA…LALI.

It belongs to the dicarboxylate/amino acid:cation symporter (DAACS) (TC 2.A.23) family.

The protein resides in the cell inner membrane. In terms of biological role, responsible for the transport of dicarboxylates such as succinate, fumarate, and malate from the periplasm across the membrane. The protein is C4-dicarboxylate transport protein of Klebsiella pneumoniae (strain 342).